Consider the following 188-residue polypeptide: Probable DNA-directed RNA polymerase subunit delta (188 aa).

One can recognise an HTH HARE-type domain in the interval 14–83 (LSMIEVARAI…GENKWGLRSW (70 aa)). The tract at residues 119-188 (EDAIDYSADD…EDEEDEEEEE (70 aa)) is disordered.

This sequence belongs to the RpoE family. RNAP is composed of a core of 2 alpha, a beta and a beta' subunits. The core is associated with a delta subunit and one of several sigma factors.

Participates in both the initiation and recycling phases of transcription. In the presence of the delta subunit, RNAP displays an increased specificity of transcription, a decreased affinity for nucleic acids, and an increased efficiency of RNA synthesis because of enhanced recycling. The protein is Probable DNA-directed RNA polymerase subunit delta of Streptococcus equi subsp. equi (strain 4047).